The following is a 341-amino-acid chain: Anthranilate phosphoribosyltransferase (341 aa).

Residues Gly-83, 86-87, Thr-91, 93-96, 111-119, and Ser-123 contribute to the 5-phospho-alpha-D-ribose 1-diphosphate site; these read GD, NIST, and KHGNRGVSS. Gly-83 contributes to the anthranilate binding site. Ser-95 is a binding site for Mg(2+). Asn-114 provides a ligand contact to anthranilate. Arg-169 is a binding site for anthranilate. 2 residues coordinate Mg(2+): Asp-228 and Glu-229.

The protein belongs to the anthranilate phosphoribosyltransferase family. Homodimer. The cofactor is Mg(2+).

It catalyses the reaction N-(5-phospho-beta-D-ribosyl)anthranilate + diphosphate = 5-phospho-alpha-D-ribose 1-diphosphate + anthranilate. It participates in amino-acid biosynthesis; L-tryptophan biosynthesis; L-tryptophan from chorismate: step 2/5. Functionally, catalyzes the transfer of the phosphoribosyl group of 5-phosphorylribose-1-pyrophosphate (PRPP) to anthranilate to yield N-(5'-phosphoribosyl)-anthranilate (PRA). The chain is Anthranilate phosphoribosyltransferase from Cupriavidus necator (strain ATCC 17699 / DSM 428 / KCTC 22496 / NCIMB 10442 / H16 / Stanier 337) (Ralstonia eutropha).